The sequence spans 191 residues: UPF0312 protein Sbal195_3198 (191 aa).

Positions 1-22 (MKKQLFSALIGASLLAPMAASA) are cleaved as a signal peptide.

It belongs to the UPF0312 family. Type 1 subfamily.

Its subcellular location is the periplasm. The chain is UPF0312 protein Sbal195_3198 from Shewanella baltica (strain OS195).